The chain runs to 434 residues: Fez family zinc finger protein 2 (434 aa).

An Engrailed homology 1 repressor motif is present at residues 27-42 (SLAFSIERIMAKTSEP). 6 consecutive C2H2-type zinc fingers follow at residues 253–275 (FTCE…MPVH), 281–303 (FVCK…KIIH), 309–331 (HKCN…IRIH), 337–359 (FVCE…KLTH), 365–387 (YKCS…MHTH), and 393–416 (FTCA…RKLH).

It belongs to the krueppel C2H2-type zinc-finger protein family.

Its subcellular location is the nucleus. Functionally, transcription repressor. Component of the regulatory cascade that controls the development of dopaminergic (DA) and serotonergic (5HT) neurons. The polypeptide is Fez family zinc finger protein 2 (fezf2) (Xenopus laevis (African clawed frog)).